Consider the following 429-residue polypeptide: Phosphoribosylamine--glycine ligase (429 aa).

Residues K109 to A316 enclose the ATP-grasp domain. V135–S196 lines the ATP pocket. Residues E286 and N288 each coordinate Mg(2+).

It belongs to the GARS family. The cofactor is Mg(2+). It depends on Mn(2+) as a cofactor.

The catalysed reaction is 5-phospho-beta-D-ribosylamine + glycine + ATP = N(1)-(5-phospho-beta-D-ribosyl)glycinamide + ADP + phosphate + H(+). The protein operates within purine metabolism; IMP biosynthesis via de novo pathway; N(1)-(5-phospho-D-ribosyl)glycinamide from 5-phospho-alpha-D-ribose 1-diphosphate: step 2/2. The protein is Phosphoribosylamine--glycine ligase of Vibrio cholerae serotype O1 (strain ATCC 39315 / El Tor Inaba N16961).